Here is a 187-residue protein sequence, read N- to C-terminus: Elongation factor P (187 aa).

The protein belongs to the elongation factor P family.

Its subcellular location is the cytoplasm. Its pathway is protein biosynthesis; polypeptide chain elongation. Involved in peptide bond synthesis. Stimulates efficient translation and peptide-bond synthesis on native or reconstituted 70S ribosomes in vitro. Probably functions indirectly by altering the affinity of the ribosome for aminoacyl-tRNA, thus increasing their reactivity as acceptors for peptidyl transferase. This Mycobacterium avium (strain 104) protein is Elongation factor P.